Consider the following 379-residue polypeptide: Flagellar P-ring protein (379 aa).

The N-terminal stretch at Met-1–Ala-32 is a signal peptide.

It belongs to the FlgI family. As to quaternary structure, the basal body constitutes a major portion of the flagellar organelle and consists of four rings (L,P,S, and M) mounted on a central rod.

It is found in the periplasm. The protein localises to the bacterial flagellum basal body. Assembles around the rod to form the L-ring and probably protects the motor/basal body from shearing forces during rotation. The protein is Flagellar P-ring protein of Rhodospirillum rubrum (strain ATCC 11170 / ATH 1.1.1 / DSM 467 / LMG 4362 / NCIMB 8255 / S1).